The chain runs to 117 residues: Large ribosomal subunit protein bL20c (117 aa).

This sequence belongs to the bacterial ribosomal protein bL20 family.

Its subcellular location is the plastid. It localises to the chloroplast. Its function is as follows. Binds directly to 23S ribosomal RNA and is necessary for the in vitro assembly process of the 50S ribosomal subunit. It is not involved in the protein synthesizing functions of that subunit. This Phalaenopsis aphrodite subsp. formosana (Moth orchid) protein is Large ribosomal subunit protein bL20c.